The primary structure comprises 425 residues: Serine--tRNA ligase (425 aa).

233-235 contacts L-serine; sequence TAE. 264 to 266 is an ATP binding site; the sequence is RRE. Glutamate 287 provides a ligand contact to L-serine. 351–354 contacts ATP; sequence EISS. Serine 387 provides a ligand contact to L-serine.

It belongs to the class-II aminoacyl-tRNA synthetase family. Type-1 seryl-tRNA synthetase subfamily. In terms of assembly, homodimer. The tRNA molecule binds across the dimer.

The protein resides in the cytoplasm. It catalyses the reaction tRNA(Ser) + L-serine + ATP = L-seryl-tRNA(Ser) + AMP + diphosphate + H(+). The catalysed reaction is tRNA(Sec) + L-serine + ATP = L-seryl-tRNA(Sec) + AMP + diphosphate + H(+). The protein operates within aminoacyl-tRNA biosynthesis; selenocysteinyl-tRNA(Sec) biosynthesis; L-seryl-tRNA(Sec) from L-serine and tRNA(Sec): step 1/1. Catalyzes the attachment of serine to tRNA(Ser). Is also able to aminoacylate tRNA(Sec) with serine, to form the misacylated tRNA L-seryl-tRNA(Sec), which will be further converted into selenocysteinyl-tRNA(Sec). This Thermotoga maritima (strain ATCC 43589 / DSM 3109 / JCM 10099 / NBRC 100826 / MSB8) protein is Serine--tRNA ligase.